Consider the following 253-residue polypeptide: DNA repair protein RecO (253 aa).

Belongs to the RecO family.

In terms of biological role, involved in DNA repair and RecF pathway recombination. This Dehalococcoides mccartyi (strain ATCC BAA-2266 / KCTC 15142 / 195) (Dehalococcoides ethenogenes (strain 195)) protein is DNA repair protein RecO.